We begin with the raw amino-acid sequence, 134 residues long: Retinol-binding protein 2 (134 aa).

All-trans-retinol-binding residues include lysine 41 and glutamine 109.

The protein belongs to the calycin superfamily. Fatty-acid binding protein (FABP) family.

The protein resides in the cytoplasm. In terms of biological role, intracellular transport of retinol. The sequence is that of Retinol-binding protein 2 (Rbp2) from Rattus norvegicus (Rat).